The chain runs to 250 residues: Tail assembly protein GT (250 aa).

The protein belongs to the lambda-like tail assembly protein family. As to quaternary structure, interacts (via C-terminus) with tail tube protein. Interacts (via N-terminus) with the tail assembly protein G and the tape measure protein.

It localises to the host cytoplasm. Its function is as follows. Promotes tail assembly by creating a scaffold for the tail tube proteins. Tail assembly proteins G and GT probably wrap the linear tape measure protein to create a tail assembly scaffold. This allows the polymerization of the tail tube protein, during which G and GT are released, therefore they are absent in the mature virion. The tail assembly protein GT is produced by a rare -1 ribosomal frameshift. The ratio of translated G/GT is about 20, and this ratio is important for proper tail assembly. This is Tail assembly protein GT from Escherichia coli (Bacteriophage N15).